Here is a 144-residue protein sequence, read N- to C-terminus: Large ribosomal subunit protein uL11 (144 aa).

The protein belongs to the universal ribosomal protein uL11 family. As to quaternary structure, part of the ribosomal stalk of the 50S ribosomal subunit. Interacts with L10 and the large rRNA to form the base of the stalk. L10 forms an elongated spine to which L12 dimers bind in a sequential fashion forming a multimeric L10(L12)X complex. Post-translationally, one or more lysine residues are methylated.

In terms of biological role, forms part of the ribosomal stalk which helps the ribosome interact with GTP-bound translation factors. The polypeptide is Large ribosomal subunit protein uL11 (Parafrankia sp. (strain EAN1pec)).